A 305-amino-acid polypeptide reads, in one-letter code: Axin interactor, dorsalization-associated protein B (305 aa).

Positions 126–137 are enriched in acidic residues; that stretch reads ENLEVEEEEEDG. The interval 126 to 146 is disordered; sequence ENLEVEEEEEDGGAGAGSPDL. The axin-binding stretch occupies residues 153–220; it reads GTLLPRLPSE…RKEDTYVHFN (68 aa). In terms of domain architecture, C2 Aida-type spans 156 to 303; it reads LPRLPSEPGM…LYLHLLQTLL (148 aa).

Belongs to the AIDA family.

Functionally, acts as a ventralizing factor during embryogenesis. Inhibits axin-mediated JNK activation by binding axin and disrupting axin homodimerization. This in turn antagonizes a Wnt/beta-catenin-independent dorsalization pathway activated by axin/JNK-signaling. This is Axin interactor, dorsalization-associated protein B (aida-b) from Xenopus laevis (African clawed frog).